The sequence spans 354 residues: Thiamine thiazole synthase (354 aa).

Substrate-binding positions include alanine 83, 104–105, glycine 112, and valine 177; that span reads EA. A 2,3-didehydroalanine (Cys) modification is found at cysteine 210. Substrate is bound by residues aspartate 212, histidine 227, methionine 305, and 315-317; that span reads RMG.

Belongs to the THI4 family. Homooctamer. It depends on Fe cation as a cofactor. Post-translationally, during the catalytic reaction, a sulfide is transferred from Cys-210 to a reaction intermediate, generating a dehydroalanine residue.

It localises to the cytoplasm. The protein resides in the nucleus. It catalyses the reaction [ADP-thiazole synthase]-L-cysteine + glycine + NAD(+) = [ADP-thiazole synthase]-dehydroalanine + ADP-5-ethyl-4-methylthiazole-2-carboxylate + nicotinamide + 3 H2O + 2 H(+). Involved in biosynthesis of the thiamine precursor thiazole. Catalyzes the conversion of NAD and glycine to adenosine diphosphate 5-(2-hydroxyethyl)-4-methylthiazole-2-carboxylic acid (ADT), an adenylated thiazole intermediate. The reaction includes an iron-dependent sulfide transfer from a conserved cysteine residue of the protein to a thiazole intermediate. The enzyme can only undergo a single turnover, which suggests it is a suicide enzyme. May have additional roles in adaptation to various stress conditions and in DNA damage tolerance. This is Thiamine thiazole synthase from Candida albicans (strain SC5314 / ATCC MYA-2876) (Yeast).